We begin with the raw amino-acid sequence, 428 residues long: MILKNVYDVFMERGFIEQVTDENAVRKALEAPLACYIGFDPTARSLHIGSLVPIMALIHLQRHGHTSIALVGGGTALIGDPSGKTEMRQILTREKIELNATCMRRQFARYLSFEDKKAMMINNADWLTKLNYISFLRDIGRHFSVNKMLAAESYKMRLEKGLNFIEFNYMLLQAYDFLYLFQNHNCVMQMGGNDQWGNMLAGVDLIRRVEGKVAHSMTFPLLTTATGQKMGKTEKGAVWLDRELTSPYEYYQYWINTGDIDVGKFLALFTFLPMEEIHQVKSLSDKELNMAKAILAFEATKITHGEDAALAAWNASAVAFGVKLIDTSLMPSSTIPRGQLSQDASAIPFIKKSWNELAKGIPAYEIMHECGLCSSKSEARRLIAQGGGYVNENPIFAFDELITTEHLDRSGQIKLRKGKKKYMIIKVE.

Residue Y36 participates in L-tyrosine binding. Positions 41–50 (PTARSLHIGS) match the 'HIGH' region motif. L-tyrosine-binding residues include Y169 and Q173. The 'KMSKS' region signature appears at 229–233 (KMGKT). K232 is an ATP binding site. The 67-residue stretch at 361–427 (IPAYEIMHEC…GKKKYMIIKV (67 aa)) folds into the S4 RNA-binding domain.

This sequence belongs to the class-I aminoacyl-tRNA synthetase family. TyrS type 1 subfamily. Homodimer.

It is found in the cytoplasm. The enzyme catalyses tRNA(Tyr) + L-tyrosine + ATP = L-tyrosyl-tRNA(Tyr) + AMP + diphosphate + H(+). In terms of biological role, catalyzes the attachment of tyrosine to tRNA(Tyr) in a two-step reaction: tyrosine is first activated by ATP to form Tyr-AMP and then transferred to the acceptor end of tRNA(Tyr). This is Tyrosine--tRNA ligase from Syntrophus aciditrophicus (strain SB).